Consider the following 180-residue polypeptide: ATP synthase subunit delta (180 aa).

It belongs to the ATPase delta chain family. As to quaternary structure, F-type ATPases have 2 components, F(1) - the catalytic core - and F(0) - the membrane proton channel. F(1) has five subunits: alpha(3), beta(3), gamma(1), delta(1), epsilon(1). F(0) has three main subunits: a(1), b(2) and c(10-14). The alpha and beta chains form an alternating ring which encloses part of the gamma chain. F(1) is attached to F(0) by a central stalk formed by the gamma and epsilon chains, while a peripheral stalk is formed by the delta and b chains.

It is found in the cell inner membrane. Functionally, f(1)F(0) ATP synthase produces ATP from ADP in the presence of a proton or sodium gradient. F-type ATPases consist of two structural domains, F(1) containing the extramembraneous catalytic core and F(0) containing the membrane proton channel, linked together by a central stalk and a peripheral stalk. During catalysis, ATP synthesis in the catalytic domain of F(1) is coupled via a rotary mechanism of the central stalk subunits to proton translocation. Its function is as follows. This protein is part of the stalk that links CF(0) to CF(1). It either transmits conformational changes from CF(0) to CF(1) or is implicated in proton conduction. The polypeptide is ATP synthase subunit delta (Parabacteroides distasonis (strain ATCC 8503 / DSM 20701 / CIP 104284 / JCM 5825 / NCTC 11152)).